The sequence spans 303 residues: Probable 5-dehydro-4-deoxyglucarate dehydratase (303 aa).

The protein belongs to the DapA family.

It carries out the reaction 5-dehydro-4-deoxy-D-glucarate + H(+) = 2,5-dioxopentanoate + CO2 + H2O. The protein operates within carbohydrate acid metabolism; D-glucarate degradation; 2,5-dioxopentanoate from D-glucarate: step 2/2. In Pseudomonas putida (strain GB-1), this protein is Probable 5-dehydro-4-deoxyglucarate dehydratase.